The following is a 123-amino-acid chain: Ribosome-binding factor A (123 aa).

The protein belongs to the RbfA family. Monomer. Binds 30S ribosomal subunits, but not 50S ribosomal subunits or 70S ribosomes.

It localises to the cytoplasm. One of several proteins that assist in the late maturation steps of the functional core of the 30S ribosomal subunit. Associates with free 30S ribosomal subunits (but not with 30S subunits that are part of 70S ribosomes or polysomes). Required for efficient processing of 16S rRNA. May interact with the 5'-terminal helix region of 16S rRNA. This Solibacter usitatus (strain Ellin6076) protein is Ribosome-binding factor A.